We begin with the raw amino-acid sequence, 157 residues long: Urease accessory protein UreE (157 aa).

Belongs to the UreE family.

The protein localises to the cytoplasm. Involved in urease metallocenter assembly. Binds nickel. Probably functions as a nickel donor during metallocenter assembly. This is Urease accessory protein UreE from Corynebacterium glutamicum (strain R).